Consider the following 342-residue polypeptide: Protein-ribulosamine 3-kinase, chloroplastic (342 aa).

The N-terminal 46 residues, Met1–Met46, are a transit peptide targeting the chloroplast. Glu141–Ile143 contacts ATP. Catalysis depends on Asp246, which acts as the Proton acceptor.

It belongs to the fructosamine kinase family.

It is found in the plastid. It localises to the chloroplast. The catalysed reaction is N(6)-D-ribulosyl-L-lysyl-[protein] + ATP = N(6)-(3-O-phospho-D-ribulosyl)-L-lysyl-[protein] + ADP + H(+). It catalyses the reaction N(6)-(D-erythrulosyl)-L-lysyl-[protein] + ATP = N(6)-(3-O-phospho-D-erythrulosyl)-L-lysyl-[protein] + ADP + H(+). Its function is as follows. Initiates a process leading to the deglycation of proteins. Phosphorylates low-molecular-mass and protein-bound erythrulosamines and ribulosamines, but not fructosamines or psicosamines, on the third carbon of the sugar moiety. Protein-bound erythrulosamine 3-phosphates and ribulosamine 3-phosphates are unstable and decompose under physiological conditions. The polypeptide is Protein-ribulosamine 3-kinase, chloroplastic (Oryza sativa subsp. indica (Rice)).